Reading from the N-terminus, the 471-residue chain is Probable ribonuclease FAU-1 (471 aa).

This sequence belongs to the FAU-1 family.

Functionally, probable RNase involved in rRNA stability through maturation and/or degradation of precursor rRNAs. Binds to RNA in loop regions with AU-rich sequences. The polypeptide is Probable ribonuclease FAU-1 (Thermococcus gammatolerans (strain DSM 15229 / JCM 11827 / EJ3)).